We begin with the raw amino-acid sequence, 624 residues long: FAD-dependent monooxygenase apdD (624 aa).

FAD contacts are provided by glutamate 73 and aspartate 359.

Belongs to the paxM FAD-dependent monooxygenase family. FAD is required as a cofactor.

It participates in secondary metabolite biosynthesis. FAD-dependent monooxygenase; part of the gene cluster that mediates the biosynthesis of aspyridones. The polyketide-amino acid backbone preaspyridone A is first assembled by the PKS-NRPS hybrid apdA. The assembly of preaspyridone A is initiated by loading of malonyl-CoA onto apdA, followed by decarboxylation to yield the acetyl starter unit. The growing polyketide chain then elongates into a tetraketide. The adpA PKS module catalyzes three Claisen condensations, as well as beta-keto processing and methylation. Alpha-methylation step during polyketide synthesis is a prerequisite and a key checkpoint for chain transfer between PKS and NRPS modules. The downstream NRPS module contains the condensation (C), adenylation (A), and thiolation (T) domains and catalyzes the incorporation of tyrosine via the formation of the L-tyrosinyl-thioester and the amide linkage between L-tyrosinyl-thioester and the tetraketide. The bimodular assembly line is terminated with a reductase (R) domain that facilitates formation and release of the tetramic acid product. Because apdA lacks a designated enoylreductase (ER) domain, the required activity is provided the enoyl reductase apdC. ApdC appears to operate with different stereoselectivity in different PKS cycle. Combined with apdC, apdA is proposed to synthesize preaspyridone A via about 20 enzymatic steps. A number of oxidative steps performed successively by the cytochrome P450 monooxygenases apdE and apdB are required for the conversion of preaspyridone A to aspyridone A. The cytochrome P450 monooxygenase apdE is responsible for the oxidative dephenylation of preaspyridone A. Finally, the predicted FAD-dependent monooxygenase apdD and the acyl-CoA dehydrogenase apdG may be involved in the transformation of aspyridone A into aspyridone B. The polypeptide is FAD-dependent monooxygenase apdD (Emericella nidulans (strain FGSC A4 / ATCC 38163 / CBS 112.46 / NRRL 194 / M139) (Aspergillus nidulans)).